The primary structure comprises 62 residues: Large ribosomal subunit protein bL32m (62 aa).

It belongs to the bacterial ribosomal protein bL32 family.

The protein localises to the mitochondrion. This is Large ribosomal subunit protein bL32m (RPL32) from Reclinomonas americana.